The sequence spans 472 residues: Lactate utilization protein B (472 aa).

4Fe-4S ferredoxin-type domains follow at residues 304 to 334 (GTEFQPVLQCIRCAACVNVCPVYRHIGGHSY) and 353 to 382 (YDDYKELPYASTLCAACTEACPVKIPLHEL). [4Fe-4S] cluster is bound by residues Cys313, Cys316, Cys319, Cys323, Cys366, Cys369, and Cys373.

It belongs to the LutB/YkgF family.

Functionally, is involved in L-lactate degradation and allows cells to grow with lactate as the sole carbon source. Has probably a role as an electron transporter during oxidation of L-lactate. In Anoxybacillus flavithermus (strain DSM 21510 / WK1), this protein is Lactate utilization protein B.